Reading from the N-terminus, the 519-residue chain is General transcription factor 3C polypeptide 5 (519 aa).

A2 bears the N-acetylalanine mark. The tract at residues 465–519 (ALFSSSAKADGGKEQLTYESGEDEEDEEEEEEEEEDFKPSDGSENEMETEILDYV) is disordered. 2 stretches are compositionally biased toward acidic residues: residues 484–500 (SGEDEEDEEEEEEEEED) and 507–519 (SENEMETEILDYV).

Belongs to the TFIIIC subunit 5 family. As to quaternary structure, part of the TFIIIC subcomplex TFIIIC2, consisting of six subunits, GTF3C1, GTF3C2, GTF3C3, GTF3C4, GTF3C5 and GTF3C6. Interacts with BRF1, GTF3C6 and TBP.

Its subcellular location is the nucleus. In terms of biological role, involved in RNA polymerase III-mediated transcription. Integral, tightly associated component of the DNA-binding TFIIIC2 subcomplex that directly binds tRNA and virus-associated RNA promoters. This Homo sapiens (Human) protein is General transcription factor 3C polypeptide 5 (GTF3C5).